The primary structure comprises 326 residues: Tetraacyldisaccharide 4'-kinase (326 aa).

55-62 (TVGGNGKT) provides a ligand contact to ATP.

It belongs to the LpxK family.

It catalyses the reaction a lipid A disaccharide + ATP = a lipid IVA + ADP + H(+). The protein operates within glycolipid biosynthesis; lipid IV(A) biosynthesis; lipid IV(A) from (3R)-3-hydroxytetradecanoyl-[acyl-carrier-protein] and UDP-N-acetyl-alpha-D-glucosamine: step 6/6. In terms of biological role, transfers the gamma-phosphate of ATP to the 4'-position of a tetraacyldisaccharide 1-phosphate intermediate (termed DS-1-P) to form tetraacyldisaccharide 1,4'-bis-phosphate (lipid IVA). This chain is Tetraacyldisaccharide 4'-kinase, found in Tolumonas auensis (strain DSM 9187 / NBRC 110442 / TA 4).